A 105-amino-acid chain; its full sequence is Thioredoxin-like protein slr0233 (105 aa).

In terms of domain architecture, Thioredoxin spans 1–102 (MAVKKQFANF…QAAQLIQQLQ (102 aa)). C30 and C33 are joined by a disulfide.

The protein belongs to the thioredoxin family.

In Synechocystis sp. (strain ATCC 27184 / PCC 6803 / Kazusa), this protein is Thioredoxin-like protein slr0233.